The sequence spans 1809 residues: Pyochelin synthetase PchF (1809 aa).

Residues 69 to 490 (FPLTPVQAAY…GLLRRLAQSP (422 aa)) form a condensation/cyclization region. An adenylation region spans residues 520–915 (FAERALLTPD…GREDDQVKIR (396 aa)). Positions 1407 to 1488 (APADELENAL…GLAERLRSAP (82 aa)) constitute a Carrier domain. At Ser-1442 the chain carries O-(pantetheine 4'-phosphoryl)serine. The interval 1584-1797 (LGRRYAEALH…FDCLGEALAQ (214 aa)) is thioesterase.

Belongs to the NRP synthetase family. Requires pantetheine 4'-phosphate as cofactor.

The catalysed reaction is holo-[peptidyl-carrier protein] + L-cysteine + ATP = L-cysteinyl-[peptidyl-carrier protein] + AMP + diphosphate. The protein operates within siderophore biosynthesis. Functionally, involved in the biosynthesis of the siderophore pyochelin. Adenylates L-cysteine and loads it onto its peptidyl carrier domain via a thioester linkage to the phosphopanthetheine moiety. Then forms a peptide bond between the salicyl-thiazolinyl intermediate bound to the second carrier domain of PchE and the cysteine bound to its own peptidyl carrier domain to form the salicyl-thiazolinyl-cysteinyl-S-PCP2 intermediate. It subsequently cyclizes the C-terminal cysteine to form the second thiazoline heterocycle in the salicyl-thiazolinyl-thiazolinyl-S-PCP2 intermediate. When this intermediate is released by the action of a thioesterase, it produces the tricyclic acid hydroxyphenyl-thiazolyl-thiazolinyl-carboxylic acid (HPTT-COOH), an advanced intermediate containing the aryl-4,2-bis-heterocyclic skeleton of the bithiazoline class of siderophores. This chain is Pyochelin synthetase PchF, found in Pseudomonas aeruginosa (strain ATCC 15692 / DSM 22644 / CIP 104116 / JCM 14847 / LMG 12228 / 1C / PRS 101 / PAO1).